The sequence spans 476 residues: Protein DETOXIFICATION 4 (476 aa).

The next 12 helical transmembrane spans lie at 35-55 (AVPM…SVMV), 66-86 (GVAL…FGLV), 117-137 (IPIC…LISL), 154-174 (LIPT…LLAQ), 176-196 (LVLP…AVCW), 208-228 (GAAL…SCYV), 260-280 (AAML…SGLL), 289-309 (VLSI…GVAA), 332-352 (LAGL…LFAF), 370-390 (VADL…TAVL), 408-428 (VVAY…SCEL), and 433-453 (LWCG…IVTA).

Belongs to the multi antimicrobial extrusion (MATE) (TC 2.A.66.1) family.

It localises to the membrane. The polypeptide is Protein DETOXIFICATION 4 (Arabidopsis thaliana (Mouse-ear cress)).